The sequence spans 424 residues: Imidazolonepropionase (424 aa).

Fe(3+) is bound by residues histidine 81 and histidine 83. Zn(2+) is bound by residues histidine 81 and histidine 83. 3 residues coordinate 4-imidazolone-5-propanoate: arginine 90, tyrosine 153, and histidine 186. Tyrosine 153 contacts N-formimidoyl-L-glutamate. A Fe(3+)-binding site is contributed by histidine 251. Histidine 251 is a binding site for Zn(2+). Glutamate 254 contributes to the 4-imidazolone-5-propanoate binding site. Aspartate 325 lines the Fe(3+) pocket. Zn(2+) is bound at residue aspartate 325. Residues asparagine 327 and glycine 329 each coordinate N-formimidoyl-L-glutamate. Threonine 330 is a binding site for 4-imidazolone-5-propanoate.

This sequence belongs to the metallo-dependent hydrolases superfamily. HutI family. Zn(2+) serves as cofactor. Requires Fe(3+) as cofactor.

The protein localises to the cytoplasm. It catalyses the reaction 4-imidazolone-5-propanoate + H2O = N-formimidoyl-L-glutamate. It participates in amino-acid degradation; L-histidine degradation into L-glutamate; N-formimidoyl-L-glutamate from L-histidine: step 3/3. Catalyzes the hydrolytic cleavage of the carbon-nitrogen bond in imidazolone-5-propanoate to yield N-formimidoyl-L-glutamate. It is the third step in the universal histidine degradation pathway. The sequence is that of Imidazolonepropionase from Syntrophobacter fumaroxidans (strain DSM 10017 / MPOB).